The following is a 210-amino-acid chain: Outer-membrane lipoprotein carrier protein (210 aa).

The N-terminal stretch at 1-26 is a signal peptide; that stretch reads MHMIRRAAGALAVFAVAALAAAPAWA.

The protein belongs to the LolA family. In terms of assembly, monomer.

The protein resides in the periplasm. Its function is as follows. Participates in the translocation of lipoproteins from the inner membrane to the outer membrane. Only forms a complex with a lipoprotein if the residue after the N-terminal Cys is not an aspartate (The Asp acts as a targeting signal to indicate that the lipoprotein should stay in the inner membrane). The chain is Outer-membrane lipoprotein carrier protein from Bordetella pertussis (strain Tohama I / ATCC BAA-589 / NCTC 13251).